We begin with the raw amino-acid sequence, 488 residues long: Ribulose bisphosphate carboxylase large chain (488 aa).

Residues Asn127 and Thr177 each contribute to the substrate site. The Proton acceptor role is filled by Lys179. Lys181 contacts substrate. Positions 205, 207, and 208 each coordinate Mg(2+). N6-carboxylysine is present on Lys205. Residue His297 is the Proton acceptor of the active site. Substrate contacts are provided by Arg298, His330, and Ser382.

This sequence belongs to the RuBisCO large chain family. Type I subfamily. In terms of assembly, heterohexadecamer of 8 large chains and 8 small chains. Requires Mg(2+) as cofactor.

The protein resides in the plastid. It is found in the chloroplast. The catalysed reaction is 2 (2R)-3-phosphoglycerate + 2 H(+) = D-ribulose 1,5-bisphosphate + CO2 + H2O. It catalyses the reaction D-ribulose 1,5-bisphosphate + O2 = 2-phosphoglycolate + (2R)-3-phosphoglycerate + 2 H(+). Its function is as follows. RuBisCO catalyzes two reactions: the carboxylation of D-ribulose 1,5-bisphosphate, the primary event in carbon dioxide fixation, as well as the oxidative fragmentation of the pentose substrate in the photorespiration process. Both reactions occur simultaneously and in competition at the same active site. The sequence is that of Ribulose bisphosphate carboxylase large chain from Porphyra purpurea (Red seaweed).